Here is a 521-residue protein sequence, read N- to C-terminus: Medium/long-chain-fatty-acid--[acyl-carrier-protein] ligase MbtM (521 aa).

It belongs to the ATP-dependent AMP-binding enzyme family.

The enzyme catalyses a long-chain fatty acid + holo-[ACP] + ATP = a long-chain fatty acyl-[ACP] + AMP + diphosphate. The catalysed reaction is a medium-chain fatty acid + holo-[ACP] + ATP = a medium-chain fatty acyl-[ACP] + AMP + diphosphate. The protein operates within siderophore biosynthesis; mycobactin biosynthesis. In terms of biological role, activates lipidic moieties required for mycobactin biosynthesis. Converts medium- to long-chain aliphatic fatty acids into acyl adenylate, which is further transferred on to the phosphopantetheine arm of the carrier protein MbtL. This chain is Medium/long-chain-fatty-acid--[acyl-carrier-protein] ligase MbtM (mbtM), found in Mycobacterium sp. (strain MCS).